The chain runs to 155 residues: Arginine repressor (155 aa).

This sequence belongs to the ArgR family.

It localises to the cytoplasm. It participates in amino-acid biosynthesis; L-arginine biosynthesis [regulation]. Functionally, regulates arginine biosynthesis genes. This Histophilus somni (strain 2336) (Haemophilus somnus) protein is Arginine repressor.